The primary structure comprises 381 residues: Alkanesulfonate monooxygenase (381 aa).

It belongs to the SsuD family. In terms of assembly, homotetramer.

The enzyme catalyses an alkanesulfonate + FMNH2 + O2 = an aldehyde + FMN + sulfite + H2O + 2 H(+). Functionally, catalyzes the desulfonation of aliphatic sulfonates. The protein is Alkanesulfonate monooxygenase of Escherichia coli O9:H4 (strain HS).